Reading from the N-terminus, the 362-residue chain is Endolytic peptidoglycan transglycosylase RlpA (362 aa).

Positions 1-17 (MRKQWLGICIAAGMLAA) are cleaved as a signal peptide. Cysteine 18 carries the N-palmitoyl cysteine lipid modification. The S-diacylglycerol cysteine moiety is linked to residue cysteine 18. The interval 198 to 276 (PDLSGGAGTS…PSTTPATSPA (79 aa)) is disordered. Over residues 262–276 (PVVTAPSTTPATSPA) the composition is skewed to low complexity. An SPOR domain is found at 285-361 (QSASGNFMVQ…AQLQSFITTA (77 aa)).

Belongs to the RlpA family.

It localises to the cell membrane. Functionally, lytic transglycosylase with a strong preference for naked glycan strands that lack stem peptides. This is Endolytic peptidoglycan transglycosylase RlpA from Escherichia coli (strain K12).